A 391-amino-acid chain; its full sequence is Putative gustatory receptor 98a (391 aa).

The Cytoplasmic segment spans residues 1–31; the sequence is MEQMSGELHAASLLYMRRLMKCLGMLPFGQN. A helical membrane pass occupies residues 32 to 52; that stretch reads LFSKGFCYVLLFVSLGFSSYW. The Extracellular segment spans residues 53–74; it reads RFSFDYEFDYDFLNDRFSSTID. A helical membrane pass occupies residues 75–95; it reads LSNFVALVLGHAIIVLELLWG. The Cytoplasmic segment spans residues 96–128; sequence NCSKDVDRQLQAIHSQIKLQLGTSNSTDRVRRY. A helical transmembrane segment spans residues 129–149; the sequence is CNWIYGSLIIRWLIFIVVTIY. The Extracellular segment spans residues 150 to 173; that stretch reads SNRALTINATYSELVFLARFSEFT. An N-linked (GlcNAc...) asparagine glycan is attached at Asn157. The helical transmembrane segment at 174–194 threads the bilayer; that stretch reads LYCAVILFIYQELIVGGSNVL. Topologically, residues 195–239 are cytoplasmic; that stretch reads DELYRTRYEMWSIRRLSLQKLAKLQAIHNSLWQAIRCLECYFQLS. A helical transmembrane segment spans residues 240–260; the sequence is LITLLMKFFIDTSALPYWLYL. Over 261 to 272 the chain is Extracellular; sequence SRVEHTRVAVQH. Residues 273 to 293 form a helical membrane-spanning segment; the sequence is YVATVECIKLLEIVVPCYLCT. Over 294–347 the chain is Cytoplasmic; sequence RCDAMQRKFLSMFYTVTTDRRSSQLNAALRSLNLQLSQEKYKFSAGGMVDINTE. Residues 348–368 traverse the membrane as a helical segment; the sequence is MLGKFFFGMISYIVICIQFSI. The Extracellular segment spans residues 369–391; sequence NFRAKKMSNEQMSQNITSTSAPI. N-linked (GlcNAc...) asparagine glycosylation occurs at Asn383.

It belongs to the insect chemoreceptor superfamily. Gustatory receptor (GR) family. Gr2a subfamily.

The protein localises to the cell membrane. Functionally, probable gustatory receptor which mediates acceptance or avoidance behavior, depending on its substrates. In Drosophila melanogaster (Fruit fly), this protein is Putative gustatory receptor 98a (Gr98a).